The primary structure comprises 404 residues: UBP1-associated protein 2C (404 aa).

The interval 1–29 (MDMMKKRKLDENGNGLNTNGGGTIGPTRL) is disordered. RRM domains are found at residues 75-152 (RKLF…LAAS) and 167-248 (RKIY…GKKG). Disordered regions lie at residues 246–270 (KKGGKPGMPQAQDGGSGHGHVHGEG) and 344–404 (GSGQ…PPNY).

Expressed in root apical and lateral meristems, young leaves and embryos.

The protein resides in the nucleus. In terms of biological role, heterogeneous nuclear ribonucleoprotein (hnRNP)-like protein that acts as a component of a complex regulating the turnover of mRNAs in the nucleus. Binds with high affinity to RNA molecules that contain U-rich sequences in 3'-UTRs. May function in complex with UBP1 and contribute to the stabilization of mRNAs in the nucleus. This chain is UBP1-associated protein 2C (UBA2C), found in Arabidopsis thaliana (Mouse-ear cress).